A 220-amino-acid chain; its full sequence is uncharacterized protein (220 aa).

The next 4 membrane-spanning stretches (helical) occupy residues 61–81 (LISVLTIPFYVAIIIFISFFG), 85–105 (SVMFSVIILGSVLISTCYGAF), 115–135 (FVIIQLVFLIYDLILITILLL), and 150–170 (LPLEDIPFGTDQVLLGCSLLL).

It is found in the membrane. This is an uncharacterized protein from Caenorhabditis elegans.